Here is a 432-residue protein sequence, read N- to C-terminus: Glutamyl-tRNA reductase (432 aa).

Substrate-binding positions include Thr49 to Arg52, Ser109, Glu114 to Gln116, and Gln120. Cys50 serves as the catalytic Nucleophile. Gly198–Ser203 is an NADP(+) binding site.

This sequence belongs to the glutamyl-tRNA reductase family. In terms of assembly, homodimer.

The enzyme catalyses (S)-4-amino-5-oxopentanoate + tRNA(Glu) + NADP(+) = L-glutamyl-tRNA(Glu) + NADPH + H(+). It functions in the pathway porphyrin-containing compound metabolism; protoporphyrin-IX biosynthesis; 5-aminolevulinate from L-glutamyl-tRNA(Glu): step 1/2. Its pathway is porphyrin-containing compound metabolism; chlorophyll biosynthesis. Catalyzes the NADPH-dependent reduction of glutamyl-tRNA(Glu) to glutamate 1-semialdehyde (GSA). In Synechococcus sp. (strain CC9902), this protein is Glutamyl-tRNA reductase.